Reading from the N-terminus, the 760-residue chain is BMP/retinoic acid-inducible neural-specific protein 1 (760 aa).

A signal peptide spans 1–16; the sequence is MNWRFVELLYFLFVWG. Positions 68–251 constitute an MACPF domain; sequence RYKIYREFAR…FVQSALSYIM (184 aa). N-linked (GlcNAc...) asparagine glycans are attached at residues Asn156, Asn433, Asn443, Asn553, Asn599, Asn630, and Asn676.

Belongs to the BRINP family.

The protein resides in the cytoplasm. Plays a role in neurogenesis and brain development. May suppress cell cycle progression in postmitotic neurons by inhibiting G1/S transition. This is BMP/retinoic acid-inducible neural-specific protein 1 (Brinp1) from Rattus norvegicus (Rat).